The chain runs to 437 residues: Diaminopimelate decarboxylase (437 aa).

An N6-(pyridoxal phosphate)lysine modification is found at lysine 81. Residues glycine 256 and 298–301 (EPGR) contribute to the pyridoxal 5'-phosphate site. Residues arginine 301, arginine 337, and tyrosine 341 each contribute to the substrate site. Residue cysteine 366 is the Proton donor of the active site. Substrate-binding residues include glutamate 367 and tyrosine 396. Tyrosine 396 serves as a coordination point for pyridoxal 5'-phosphate.

It belongs to the Orn/Lys/Arg decarboxylase class-II family. LysA subfamily. As to quaternary structure, homodimer. Pyridoxal 5'-phosphate serves as cofactor.

It carries out the reaction meso-2,6-diaminopimelate + H(+) = L-lysine + CO2. The protein operates within amino-acid biosynthesis; L-lysine biosynthesis via DAP pathway; L-lysine from DL-2,6-diaminopimelate: step 1/1. In terms of biological role, specifically catalyzes the decarboxylation of meso-diaminopimelate (meso-DAP) to L-lysine. The sequence is that of Diaminopimelate decarboxylase from Actinosynnema pretiosum subsp. auranticum.